Consider the following 259-residue polypeptide: Deoxyribose-phosphate aldolase (259 aa).

The active-site Proton donor/acceptor is the Asp102. The active-site Schiff-base intermediate with acetaldehyde is the Lys167. Lys201 serves as the catalytic Proton donor/acceptor.

Belongs to the DeoC/FbaB aldolase family. DeoC type 2 subfamily.

The protein localises to the cytoplasm. It catalyses the reaction 2-deoxy-D-ribose 5-phosphate = D-glyceraldehyde 3-phosphate + acetaldehyde. It participates in carbohydrate degradation; 2-deoxy-D-ribose 1-phosphate degradation; D-glyceraldehyde 3-phosphate and acetaldehyde from 2-deoxy-alpha-D-ribose 1-phosphate: step 2/2. Catalyzes a reversible aldol reaction between acetaldehyde and D-glyceraldehyde 3-phosphate to generate 2-deoxy-D-ribose 5-phosphate. In Erwinia tasmaniensis (strain DSM 17950 / CFBP 7177 / CIP 109463 / NCPPB 4357 / Et1/99), this protein is Deoxyribose-phosphate aldolase.